The primary structure comprises 298 residues: Zinc import ATP-binding protein ZnuC (298 aa).

The 216-residue stretch at 17 to 232 folds into the ABC transporter domain; that stretch reads IELRNAGVYR…PEYVRLFGSR (216 aa). 49–56 contributes to the ATP binding site; it reads GPNGAGKS. Positions 273–298 are disordered; sequence RGHCHVEDGHHHDHEHHHHEGGQPRA. Positions 276–298 are enriched in basic and acidic residues; that stretch reads CHVEDGHHHDHEHHHHEGGQPRA.

It belongs to the ABC transporter superfamily. Zinc importer (TC 3.A.1.15.5) family. The complex is composed of two ATP-binding proteins (ZnuC), two transmembrane proteins (ZnuB) and a solute-binding protein (ZnuA).

It localises to the cell inner membrane. It catalyses the reaction Zn(2+)(out) + ATP(in) + H2O(in) = Zn(2+)(in) + ADP(in) + phosphate(in) + H(+)(in). Functionally, part of the ABC transporter complex ZnuABC involved in zinc import. Responsible for energy coupling to the transport system. The chain is Zinc import ATP-binding protein ZnuC from Brucella suis biovar 1 (strain 1330).